The following is a 423-amino-acid chain: Histidine--tRNA ligase 2 (423 aa).

It belongs to the class-II aminoacyl-tRNA synthetase family. As to quaternary structure, homodimer.

It is found in the cytoplasm. The catalysed reaction is tRNA(His) + L-histidine + ATP = L-histidyl-tRNA(His) + AMP + diphosphate + H(+). This is Histidine--tRNA ligase 2 from Bacillus cereus (strain ATCC 10987 / NRS 248).